Here is a 214-residue protein sequence, read N- to C-terminus: Pyridoxine/pyridoxamine 5'-phosphate oxidase (214 aa).

Substrate contacts are provided by residues 9–12 and lysine 67; that span reads RKNY. FMN-binding positions include 62 to 67, 77 to 78, lysine 84, and glutamine 106; these read RMVLLK and YT. The substrate site is built by tyrosine 124, arginine 128, and serine 132. Residues 141–142 and tryptophan 186 contribute to the FMN site; that span reads QS. 192–194 lines the substrate pocket; it reads RLH. Arginine 196 contacts FMN.

It belongs to the pyridoxamine 5'-phosphate oxidase family. As to quaternary structure, homodimer. FMN serves as cofactor.

It carries out the reaction pyridoxamine 5'-phosphate + O2 + H2O = pyridoxal 5'-phosphate + H2O2 + NH4(+). The enzyme catalyses pyridoxine 5'-phosphate + O2 = pyridoxal 5'-phosphate + H2O2. It functions in the pathway cofactor metabolism; pyridoxal 5'-phosphate salvage; pyridoxal 5'-phosphate from pyridoxamine 5'-phosphate: step 1/1. It participates in cofactor metabolism; pyridoxal 5'-phosphate salvage; pyridoxal 5'-phosphate from pyridoxine 5'-phosphate: step 1/1. Functionally, catalyzes the oxidation of either pyridoxine 5'-phosphate (PNP) or pyridoxamine 5'-phosphate (PMP) into pyridoxal 5'-phosphate (PLP). The polypeptide is Pyridoxine/pyridoxamine 5'-phosphate oxidase (Gloeothece citriformis (strain PCC 7424) (Cyanothece sp. (strain PCC 7424))).